We begin with the raw amino-acid sequence, 308 residues long: Spermidine synthase 1 (308 aa).

Residues 17–254 enclose the PABS domain; the sequence is PGWFSEISPL…GVIGFMLCST (238 aa). Position 48 (Gln48) interacts with S-adenosyl 3-(methylsulfanyl)propylamine. Putrescine is bound at residue Tyr78. Residues Gln79, Asp103, Glu123, 154-155, and Asp173 each bind S-adenosyl 3-(methylsulfanyl)propylamine; that span reads DG. The Proton acceptor role is filled by Asp173. Putrescine contacts are provided by residues 173–176 and Tyr242; that span reads DSSD.

This sequence belongs to the spermidine/spermine synthase family.

The enzyme catalyses S-adenosyl 3-(methylsulfanyl)propylamine + putrescine = S-methyl-5'-thioadenosine + spermidine + H(+). Its pathway is amine and polyamine biosynthesis; spermidine biosynthesis; spermidine from putrescine: step 1/1. This chain is Spermidine synthase 1, found in Datura stramonium (Jimsonweed).